We begin with the raw amino-acid sequence, 307 residues long: Aspartate carbamoyltransferase catalytic subunit (307 aa).

2 residues coordinate carbamoyl phosphate: R58 and T59. K86 contacts L-aspartate. R108, H138, and Q141 together coordinate carbamoyl phosphate. 2 residues coordinate L-aspartate: R171 and R223. Carbamoyl phosphate is bound by residues A264 and P265.

It belongs to the aspartate/ornithine carbamoyltransferase superfamily. ATCase family. In terms of assembly, heterododecamer (2C3:3R2) of six catalytic PyrB chains organized as two trimers (C3), and six regulatory PyrI chains organized as three dimers (R2).

The catalysed reaction is carbamoyl phosphate + L-aspartate = N-carbamoyl-L-aspartate + phosphate + H(+). It functions in the pathway pyrimidine metabolism; UMP biosynthesis via de novo pathway; (S)-dihydroorotate from bicarbonate: step 2/3. Catalyzes the condensation of carbamoyl phosphate and aspartate to form carbamoyl aspartate and inorganic phosphate, the committed step in the de novo pyrimidine nucleotide biosynthesis pathway. This chain is Aspartate carbamoyltransferase catalytic subunit, found in Streptococcus suis (strain 98HAH33).